We begin with the raw amino-acid sequence, 799 residues long: Integrin beta-1 (799 aa).

Positions 1–20 (MNLQLVFWIGLISLICSVFG) are cleaved as a signal peptide. Residues 21-729 (QTDKNRCLKA…ETPDCPTGPD (709 aa)) lie on the Extracellular side of the membrane. The PSI domain maps to 26–76 (RCLKANAKSCGECIQAGPNCGWCTNTTFLQEGMPTSARCDDLEALKKKGCH). 28 disulfides stabilise this stretch: Cys-27-Cys-45, Cys-35-Cys-465, Cys-38-Cys-64, Cys-48-Cys-75, Cys-207-Cys-213, Cys-261-Cys-301, Cys-401-Cys-415, Cys-435-Cys-463, Cys-467-Cys-487, Cys-478-Cys-490, Cys-492-Cys-501, Cys-503-Cys-534, Cys-517-Cys-532, Cys-526-Cys-537, Cys-539-Cys-554, Cys-556-Cys-577, Cys-561-Cys-575, Cys-569-Cys-580, Cys-582-Cys-591, Cys-593-Cys-616, Cys-600-Cys-614, Cys-608-Cys-619, Cys-621-Cys-631, Cys-634-Cys-637, Cys-641-Cys-692, Cys-647-Cys-666, Cys-650-Cys-662, and Cys-700-Cys-724. Asn-50, Asn-94, and Asn-97 each carry an N-linked (GlcNAc...) asparagine glycan. Residues 140-378 (DYPIDLYYLM…QLIIDAYNSL (239 aa)) form the VWFA domain. The Mg(2+) site is built by Ser-152 and Ser-154. Ca(2+)-binding residues include Ser-154, Asp-157, Asp-158, and Glu-189. The CX3CL1-binding stretch occupies residues 207 to 213 (CTSEQNC). A glycan (N-linked (GlcNAc...) asparagine) is linked at Asn-212. Asn-244, Asp-246, Pro-248, and Glu-249 together coordinate Ca(2+). Glu-249 provides a ligand contact to Mg(2+). N-linked (GlcNAc...) asparagine glycosylation occurs at Asn-269. A CX3CL1-binding region spans residues 295 to 314 (LPNDGQCHLENNVYTMSHYY). Gly-362 is a binding site for Ca(2+). N-linked (GlcNAc...) asparagine glycosylation is found at Asn-363, Asn-406, and Asn-417. Positions 383 to 466 (ILENSKLPDG…VVLQFICKCN (84 aa)) are interaction with TMEM182. 4 consecutive I-EGF domains span residues 467–502 (CQSH…RHCE), 503–555 (CSTD…KFCE), 556–592 (CDNF…SACD), and 593–632 (CSLD…PTCE). A glycan (N-linked (GlcNAc...) asparagine) is linked at Asn-482. An N-linked (GlcNAc...) asparagine glycan is attached at Asn-521. Residue Asn-585 is glycosylated (N-linked (GlcNAc...) asparagine). Residue Asn-670 is glycosylated (N-linked (GlcNAc...) asparagine). The chain crosses the membrane as a helical span at residues 730–752 (IIPIVAGVVAGIVLIGLALLLIW). Residues 753-799 (KLLMIIHDRREFAKFEKEKMNAKWDTGENPIYKSAVTTVVNPKYEGK) are Cytoplasmic-facing. The tract at residues 763 to 768 (EFAKFE) is signal for sorting from recycling endosomes; interaction with ACAP1. Thr-778 bears the Phosphothreonine mark. Phosphotyrosine is present on Tyr-784. Ser-786 is modified (phosphoserine). The interaction with ITGB1BP1 stretch occupies residues 786–793 (SAVTTVVN). Phosphothreonine is present on Thr-790. Lys-795 carries the post-translational modification N6-acetyllysine; alternate. Lys-795 participates in a covalent cross-link: Glycyl lysine isopeptide (Lys-Gly) (interchain with G-Cter in SUMO1); alternate.

This sequence belongs to the integrin beta chain family. As to quaternary structure, interacts with seprase FAP (seprase); the interaction occurs at the cell surface of invadopodia membrane in a collagen-dependent manner. Heterodimer of an alpha and a beta subunit. Beta-1 associates with either alpha-1, alpha-2, alpha-3, alpha-4, alpha-5, alpha-6, alpha-7, alpha-8, alpha-9, alpha-10, alpha-11 or alpha-V. ITGA6:ITGB1 is found in a complex with CD9; interaction takes place in oocytes and is involved in sperm-egg fusion. Binds LGALS3BP and NMRK2, when associated with alpha-7, but not with alpha-5. Interacts with FLNA, FLNB, FLNC and RANBP9. Interacts with KRT1 in the presence of RACK1 and SRC. Interacts with JAML; integrin alpha-4/beta-1 may regulate leukocyte to endothelial cells adhesion by controlling JAML homodimerization. Interacts with RAB21. Interacts (via the cytoplasmic region) with RAB25 (via the hypervariable C-terminal region). Interacts with MYO10. Interacts with ITGB1BP1 (via C-terminal region); the interaction is a prerequisite for focal adhesion disassembly. Interacts with TLN1; the interaction is prevented by competitive binding of ITGB1BP1. Interacts with ACAP1; required for ITGB1 recycling. Interacts with ASAP3. Interacts with FERMT2; the interaction is inhibited in presence of ITGB1BP1. Interacts with DAB2. Interacts with FGR and HCK. Interacts with alpha-7A and alpha-7B in adult skeletal muscle. Interacts with alpha-7B in cardiomyocytes of adult heart. Interacts with EMP2; the interaction may be direct or indirect and ITGB1 has a heterodimer form. ITGA5:ITGB1 interacts with CCN3. ITGA4:ITGB1 is found in a ternary complex with CX3CR1 and CX3CL1. ITGA5:ITGB1 interacts with FBN1. ITGA5:ITGB1 acts as a receptor for fibronectin FN1 and mediates R-G-D-dependent cell adhesion to FN1. ITGA5:ITGB1 interacts with IL1B. Interacts with MDK. ITGA4:ITGB1 interacts with MDK; this interaction mediates MDK-induced osteoblast cells migration through PXN phosphorylation. ITGA6:ITGB1 interacts with MDK; this interaction mediates MDK-induced neurite-outgrowth. ITGA5:ITGB1 interacts with ACE2. Interacts with TMEM182 and LAMB1. Interacts with tensin TNS3; TNS3 also interacts with PEAK1, thus acting as an adapter molecule to bridge the association of PEAK1 with ITGB1. Interacts with tensin TNS4; the interaction displaces tensin TNS3 from the ITGB1 cytoplasmic tail and promotes ITGB1 stability. Integrin ITGA9:ITGB1 interacts with SPP1/OPN (via N-terminus). Integrin ITGA9:ITGB1 interacts with TNC/TNFN3 (via the 3rd Fibronectin type-III domain). Integrins ITGA4:ITGB1 and ITGA9:ITGB1 interact with SVEP1 (via Sushi domain 21); thereby inhibit Ca(2+) intracellular signaling and as a result repress vasocontraction. ITGA4:ITGB1 and ITGA5:ITGB1 interacts with SELP. ITGA5:ITGB1 interacts with IGFBP1. ITGA4:ITGB1 interacts with BCAM. Interacts with ADGRG6.

Its subcellular location is the cell membrane. It localises to the cell projection. The protein resides in the invadopodium membrane. The protein localises to the ruffle membrane. It is found in the recycling endosome. Its subcellular location is the melanosome. It localises to the lamellipodium. The protein resides in the ruffle. The protein localises to the cell junction. It is found in the focal adhesion. Integrins alpha-1/beta-1, alpha-2/beta-1, alpha-10/beta-1 and alpha-11/beta-1 are receptors for collagen. Integrins alpha-1/beta-1 and alpha-2/beta-2 recognize the proline-hydroxylated sequence G-F-P-G-E-R in collagen. Integrins alpha-2/beta-1, alpha-3/beta-1, alpha-4/beta-1, alpha-5/beta-1, alpha-8/beta-1, alpha-10/beta-1, alpha-11/beta-1 and alpha-V/beta-1 are receptors for fibronectin. Alpha-4/beta-1 recognizes one or more domains within the alternatively spliced CS-1 and CS-5 regions of fibronectin. Integrin alpha-5/beta-1 is a receptor for fibrinogen. Integrin alpha-1/beta-1, alpha-2/beta-1, alpha-6/beta-1 and alpha-7/beta-1 are receptors for lamimin. Integrin alpha-6/beta-1 (ITGA6:ITGB1) is present in oocytes and is involved in sperm-egg fusion. Integrin alpha-4/beta-1 is a receptor for VCAM1 and recognizes the sequence Q-I-D-S in VCAM1. Integrin alpha-9/beta-1 is a receptor for VCAM1, cytotactin and osteopontin. It recognizes the sequence A-E-I-D-G-I-E-L in cytotactin. Integrin alpha-3/beta-1 is a receptor for epiligrin, thrombospondin and CSPG4. Integrin alpha-3/beta-1 provides a docking site for FAP (seprase) at invadopodia plasma membranes in a collagen-dependent manner and hence may participate in the adhesion, formation of invadopodia and matrix degradation processes, promoting cell invasion. Alpha-3/beta-1 may mediate with LGALS3 the stimulation by CSPG4 of endothelial cells migration. Integrin alpha-V/beta-1 is a receptor for vitronectin. Beta-1 integrins recognize the sequence R-G-D in a wide array of ligands. When associated with alpha-7/beta-1 integrin, regulates cell adhesion and laminin matrix deposition. Involved in promoting endothelial cell motility and angiogenesis. Involved in osteoblast compaction through the fibronectin fibrillogenesis cell-mediated matrix assembly process and the formation of mineralized bone nodules. May be involved in up-regulation of the activity of kinases such as PKC via binding to KRT1. Together with KRT1 and RACK1, serves as a platform for SRC activation or inactivation. Plays a mechanistic adhesive role during telophase, required for the successful completion of cytokinesis. ITGA4:ITGB1 binds to fractalkine (CX3CL1) and may act as its coreceptor in CX3CR1-dependent fractalkine signaling. ITGA4:ITGB1 and ITGA5:ITGB1 bind to PLA2G2A via a site (site 2) which is distinct from the classical ligand-binding site (site 1) and this induces integrin conformational changes and enhanced ligand binding to site 1. ITGA5:ITGB1 acts as a receptor for fibrillin-1 (FBN1) and mediates R-G-D-dependent cell adhesion to FBN1. ITGA5:ITGB1 is a receptor for IL1B and binding is essential for IL1B signaling. ITGA5:ITGB3 is a receptor for soluble CD40LG and is required for CD40/CD40LG signaling. Plays an important role in myoblast differentiation and fusion during skeletal myogenesis. ITGA9:ITGB1 may play a crucial role in SVEP1/polydom-mediated myoblast cell adhesion. Integrins ITGA9:ITGB1 and ITGA4:ITGB1 repress PRKCA-mediated L-type voltage-gated channel Ca(2+) influx and ROCK-mediated calcium sensitivity in vascular smooth muscle cells via their interaction with SVEP1, thereby inhibit vasocontraction. In Rattus norvegicus (Rat), this protein is Integrin beta-1 (Itgb1).